The sequence spans 990 residues: Nucleotide-binding leucine-rich repeat (NLR)-like protein (990 aa).

The interval 22 to 304 (GWICAIPTEL…AVAAAYAKIL (283 aa)) is purine nucleoside phosphorylase domain. Residues 334–563 (REEHLRQVLT…TISNYLEVYE (230 aa)) form the NB-ARC domain. TPR repeat units follow at residues 732-765 (RDLL…KKLA), 774-807 (IGSM…MKQV), 816-849 (LGSM…RKQA), 858-891 (LMSM…KQQT), 900-933 (LASM…RKQV), and 942-975 (LQSM…ATLD). The disordered stretch occupies residues 965-990 (QQQQQSQATLDEGRLSKPARKRRKKK). The span at 981–990 (KPARKRRKKK) shows a compositional bias: basic residues.

It catalyses the reaction ATP + H2O = D-ribose 5-triphosphate + adenine. The enzyme catalyses dATP + H2O = 2-deoxyribose 5-triphosphate + adenine. The N-terminal purine nucleoside phosphorylase (PNP) domain cleaves the N-glycosidic bond of ATP, and to a lesser extent dATP; has very weak activity on adenosine and deoxyadenosine and no activity on (d)ADP or (d)AMP. The protein is Nucleotide-binding leucine-rich repeat (NLR)-like protein of Hyaloscypha variabilis (strain UAMH 11265 / GT02V1 / F) (Meliniomyces variabilis).